A 168-amino-acid polypeptide reads, in one-letter code: Peptide deformylase 2 (168 aa).

Residues Cys-91 and His-133 each coordinate Fe cation. Residue Glu-134 is part of the active site. Fe cation is bound at residue His-137.

The protein belongs to the polypeptide deformylase family. Fe(2+) is required as a cofactor.

It carries out the reaction N-terminal N-formyl-L-methionyl-[peptide] + H2O = N-terminal L-methionyl-[peptide] + formate. Functionally, removes the formyl group from the N-terminal Met of newly synthesized proteins. Requires at least a dipeptide for an efficient rate of reaction. N-terminal L-methionine is a prerequisite for activity but the enzyme has broad specificity at other positions. This Vibrio parahaemolyticus serotype O3:K6 (strain RIMD 2210633) protein is Peptide deformylase 2.